We begin with the raw amino-acid sequence, 232 residues long: Large ribosomal subunit protein uL1 (232 aa).

This sequence belongs to the universal ribosomal protein uL1 family. Part of the 50S ribosomal subunit.

Functionally, binds directly to 23S rRNA. The L1 stalk is quite mobile in the ribosome, and is involved in E site tRNA release. In terms of biological role, protein L1 is also a translational repressor protein, it controls the translation of the L11 operon by binding to its mRNA. The polypeptide is Large ribosomal subunit protein uL1 (Paraburkholderia phytofirmans (strain DSM 17436 / LMG 22146 / PsJN) (Burkholderia phytofirmans)).